The following is a 399-amino-acid chain: MGLSWTVPLEWGKNHSTTNPLGFFPDHQLDPAFRANTRNPDWDHNPNKDHWTEANKVGVGAFGPGFTPPHGGLLGWSPQAQGMLKTLPADPPPASTNRQSGRQPTPITPPLRDTHPQAMQWNSTTFHQALQDPRVRGLYFPAGGSSSGTVNPVPTTASLISSIFSRIGDPAPNMEGITSGFLGPLLVLQAGFFLLTKILTIPQSLDSWWTSLNFLGGAPVCLGQNSQSPTSNHSPTSCPPICPGYRWMCLRRFIIFLFILLLCLIFLLVLLGYQGMLPVCPLIPGSSTTSTGPCRTCTTLAQGTSMFPSCCCSKPSDGNCTCIPIPSSWAFGKFLWEWASARFSWLSLLVPFVQWFAGLSPTVWLSVIWMMWYWGPSLYNILSPFIPLLPIFFCLWVYI.

Position 1 is an N-acetylmethionine (Met-1). Gly-2 is lipidated: N-myristoyl glycine; by host. Residues Gly-2–Ala-118 form a pre-S1 region. Positions Gly-2–Asn-173 are pre-S. Over Gly-2–Gly-180 the chain is Virion surface; in external conformation. The Intravirion; in internal conformation portion of the chain corresponds to Gly-2–Arg-252. A glycan (N-linked (GlcNAc...) asparagine) is linked at Ser-4. The disordered stretch occupies residues Lys-85–Pro-109. Positions Ser-95–Thr-105 are enriched in polar residues. Positions Met-119–Asn-173 are pre-S2. The chain crosses the membrane as a helical span at residues Phe-181–Ile-201. Topologically, residues Pro-202 to Arg-252 are intravirion; in external conformation. A helical membrane pass occupies residues Phe-253–Tyr-273. Topologically, residues Gln-274–Ser-347 are virion surface. Residue Asn-319 is glycosylated (N-linked (GlcNAc...) asparagine; by host). A helical transmembrane segment spans residues Leu-348–Ile-368. Topologically, residues Trp-369 to Trp-374 are intravirion. Residues Gly-375–Val-397 form a helical membrane-spanning segment. Residues Tyr-398 to Ile-399 are Virion surface-facing.

It belongs to the orthohepadnavirus major surface antigen family. In terms of assembly, in its internal form (Li-HBsAg), interacts with the capsid protein and with the isoform S. Interacts with host chaperone CANX. Associates with host chaperone CANX through its pre-S2 N glycan; this association may be essential for isoform M proper secretion. As to quaternary structure, interacts with isoform L. Interacts with the antigens of satellite virus HDV (HDVAgs); this interaction is required for encapsidation of HDV genomic RNA. In terms of processing, isoform M is N-terminally acetylated by host at a ratio of 90%, and N-glycosylated by host at the pre-S2 region. Post-translationally, myristoylated.

Its subcellular location is the virion membrane. The large envelope protein exists in two topological conformations, one which is termed 'external' or Le-HBsAg and the other 'internal' or Li-HBsAg. In its external conformation the protein attaches the virus to cell receptors and thereby initiating infection. This interaction determines the species specificity and liver tropism. This attachment induces virion internalization predominantly through caveolin-mediated endocytosis. The large envelope protein also assures fusion between virion membrane and endosomal membrane. In its internal conformation the protein plays a role in virion morphogenesis and mediates the contact with the nucleocapsid like a matrix protein. In terms of biological role, the middle envelope protein plays an important role in the budding of the virion. It is involved in the induction of budding in a nucleocapsid independent way. In this process the majority of envelope proteins bud to form subviral lipoprotein particles of 22 nm of diameter that do not contain a nucleocapsid. This chain is Large envelope protein, found in Hepatitis B virus genotype E (isolate Cote d'Ivoire/ABI-129/2003) (HBV-E).